Reading from the N-terminus, the 219-residue chain is MKFMVTEQKTLIYPVINLITGQHNYIGFKCRISTNNANYVVHRVFSIQNKLSREHTASTKTKSQVRGGGKKPWKQKGTGRARAGSIRSPLWRGGGVVFGPKPKNVFFKINKKEIRLALYTVLSNALPKTTVVSSLEGLPNFISTQALIKFLRSLNVSLDNRVLIVVEKKETPLFLSCRNIKNLALIQADHLNVKSVILAQSLVVTLQALKIIYKTFNDN.

The tract at residues 53–81 is disordered; the sequence is REHTASTKTKSQVRGGGKKPWKQKGTGRA. Basic residues predominate over residues 68-79; it reads GGKKPWKQKGTG.

Belongs to the universal ribosomal protein uL4 family. In terms of assembly, part of the 50S ribosomal subunit.

It is found in the plastid. Its subcellular location is the chloroplast. In terms of biological role, probably binds the 23S rRNA. This chain is Large ribosomal subunit protein uL4c (rpl4), found in Cyanidium caldarium (Red alga).